Reading from the N-terminus, the 248-residue chain is mRNA-decapping protein OPG122 (248 aa).

Residues 45-227 (HKRVSVSAIL…IAKYALDTAK (183 aa)) enclose the Nudix hydrolase domain. The short motif at 125–147 (GGILKRGENVPECLSREIKEEVN) is the Nudix box element. Glu132 is a Mg(2+) binding site. Glu141 (nucleophile) is an active-site residue. Residue Glu145 participates in Mn(2+) binding. Asp167 contacts Mg(2+).

This sequence belongs to the Nudix hydrolase family. Mg(2+) is required as a cofactor. It depends on Mn(2+) as a cofactor.

It is found in the host mitochondrion. Functionally, decapping enzyme that remove the protective 5'-cap from both host and viral mRNAs to commit transcripts for decay by the cellular exonuclease XRN1. Preferentially targets spliced mRNAs and since all viral genes are intronless, it preferentially targets host over viral transcripts. Acceleration of the turnover of cellular transcripts promotes the shutoff of host protein synthesis and therefore diminish the magnitude of antiviral response. The sequence is that of mRNA-decapping protein OPG122 (OPG122) from Variola virus (isolate Human/India/Ind3/1967) (VARV).